We begin with the raw amino-acid sequence, 64 residues long: Large ribosomal subunit protein bL33c (64 aa).

It belongs to the bacterial ribosomal protein bL33 family.

The protein resides in the plastid. The protein localises to the chloroplast. The sequence is that of Large ribosomal subunit protein bL33c (rpl33) from Trieres chinensis (Marine centric diatom).